We begin with the raw amino-acid sequence, 396 residues long: Inositol polyphosphate multikinase (396 aa).

Residues 1 to 13 (MAAEPPALRLRPP) show a composition bias toward low complexity. Residues 1–22 (MAAEPPALRLRPPGSTGDSPPV) are disordered. Residue alanine 2 is modified to N-acetylalanine. Serine 19 is subject to Phosphoserine. Lysine 58 lines the ATP pocket. Arginine 65 is a substrate binding site. Residues 114-116 (EDV) and aspartate 127 contribute to the ATP site. Substrate contacts are provided by residues lysine 129, 143-150 (KIQQQVSK), and glutamine 179. The Nuclear localization signal signature appears at 300 to 310 (RHRKLYAKKHQ). Aspartate 365 contacts ATP.

This sequence belongs to the inositol phosphokinase (IPK) family. The cofactor is Mg(2+).

Its subcellular location is the nucleus. It catalyses the reaction 1D-myo-inositol 1,4,5-trisphosphate + 2 ATP = 1D-myo-inositol 1,3,4,5,6-pentakisphosphate + 2 ADP + 2 H(+). The catalysed reaction is 1D-myo-inositol 1,3,4,6-tetrakisphosphate + ATP = 1D-myo-inositol 1,3,4,5,6-pentakisphosphate + ADP + H(+). It carries out the reaction 1-octadecanoyl-2-(5Z,8Z,11Z,14Z)-eicosatetraenoyl-sn-glycero-3-phospho-1D-myo-inositol 4,5-bisphosphate + ATP = 1-octadecanoyl-2-(5Z,8Z,11Z,14Z-eicosatetraenoyl)-sn-glycero-3-phospho-(1D-myo-inositol 3,4,5-triphosphate) + ADP + H(+). The enzyme catalyses a 1,2-diacyl-sn-glycero-3-phospho-(1D-myo-inositol-4,5-bisphosphate) + ATP = a 1,2-diacyl-sn-glycero-3-phospho-(1D-myo-inositol-3,4,5-trisphosphate) + ADP + H(+). It catalyses the reaction 1D-myo-inositol 1,4,5,6-tetrakisphosphate + ATP = 1D-myo-inositol 1,3,4,5,6-pentakisphosphate + ADP + H(+). It functions in the pathway phospholipid metabolism; phosphatidylinositol metabolism. In terms of biological role, inositol phosphate kinase with a broad substrate specificity. Phosphorylates inositol 1,4,5-trisphosphate (Ins(1,4,5)P3) first to inositol 1,3,4,5-tetrakisphosphate and then to inositol 1,3,4,5,6-pentakisphosphate (Ins(1,3,4,5,6)P5). Phosphorylates inositol 1,3,4,6-tetrakisphosphate (Ins(1,3,4,6)P4). Phosphorylates inositol 1,4,5,6-tetrakisphosphate (Ins(1,4,5,6)P4). Phosphorylates glycero-3-phospho-1D-myo-inositol 4,5-bisphosphate to glycero-3-phospho-1D-myo-inositol 3,4,5-trisphosphate. Plays an important role in MLKL-mediated necroptosis via its role in the biosynthesis of inositol pentakisphosphate (InsP5) and inositol hexakisphosphate (InsP6). Binding of these highly phosphorylated inositol phosphates to MLKL mediates the release of an N-terminal auto-inhibitory region, leading to activation of the kinase. Essential for activated phospho-MLKL to oligomerize and localize to the cell membrane during necroptosis. Required for normal embryonic development, probably via its role in the biosynthesis of inositol 1,3,4,5,6-pentakisphosphate (Ins(1,3,4,5,6)P5) and inositol hexakisphosphate (InsP6). The sequence is that of Inositol polyphosphate multikinase (Ipmk) from Mus musculus (Mouse).